A 39-amino-acid polypeptide reads, in one-letter code: Photosystem II reaction center protein L (39 aa).

A helical membrane pass occupies residues 18 to 38 (SLYLGLLFVFVTGVLMSSYFF).

This sequence belongs to the PsbL family. In terms of assembly, PSII is composed of 1 copy each of membrane proteins PsbA, PsbB, PsbC, PsbD, PsbE, PsbF, PsbH, PsbI, PsbJ, PsbK, PsbL, PsbM, PsbT, PsbX, PsbY, PsbZ, Psb30/Ycf12, peripheral proteins PsbO, CyanoQ (PsbQ), PsbU, PsbV and a large number of cofactors. It forms dimeric complexes.

It is found in the cellular thylakoid membrane. One of the components of the core complex of photosystem II (PSII). PSII is a light-driven water:plastoquinone oxidoreductase that uses light energy to abstract electrons from H(2)O, generating O(2) and a proton gradient subsequently used for ATP formation. It consists of a core antenna complex that captures photons, and an electron transfer chain that converts photonic excitation into a charge separation. This subunit is found at the monomer-monomer interface and is required for correct PSII assembly and/or dimerization. In Synechococcus sp. (strain CC9902), this protein is Photosystem II reaction center protein L.